The primary structure comprises 396 residues: Alpha-galactosidase 2 (396 aa).

The signal sequence occupies residues 1–25; that stretch reads MVLLSFSLRFIAFTLTITLTQIADG. Cystine bridges form between Cys52–Cys84 and Cys132–Cys163. Asn55 carries an N-linked (GlcNAc...) asparagine glycan. Substrate contacts are provided by residues 82 to 83 and Lys159; that span reads DD. Asp161 functions as the Nucleophile in the catalytic mechanism. Residues 194–198, Arg212, and Asp216 each bind substrate; that span reads EWGQE. Residue Asp216 is the Proton donor of the active site. Residues Asn343 and Asn354 are each glycosylated (N-linked (GlcNAc...) asparagine).

It belongs to the glycosyl hydrolase 27 family. Homodimer.

It localises to the secreted. Its subcellular location is the cell wall. The protein resides in the extracellular space. It is found in the apoplast. It carries out the reaction Hydrolysis of terminal, non-reducing alpha-D-galactose residues in alpha-D-galactosides, including galactose oligosaccharides, galactomannans and galactolipids.. Its function is as follows. May regulate leaf (and possibly other organ) development by functioning in cell wall loosening and cell wall expansion. The sequence is that of Alpha-galactosidase 2 from Arabidopsis thaliana (Mouse-ear cress).